We begin with the raw amino-acid sequence, 247 residues long: Uridylate kinase (247 aa).

Lysine 15–glycine 18 serves as a coordination point for ATP. Positions glycine 23–glycine 28 are involved in allosteric activation by GTP. Residue glycine 57 coordinates UMP. Residues glycine 58 and arginine 62 each coordinate ATP. Residues aspartate 77 and threonine 138–threonine 145 each bind UMP. Positions 165, 171, and 174 each coordinate ATP.

It belongs to the UMP kinase family. As to quaternary structure, homohexamer.

It localises to the cytoplasm. The catalysed reaction is UMP + ATP = UDP + ADP. Its pathway is pyrimidine metabolism; CTP biosynthesis via de novo pathway; UDP from UMP (UMPK route): step 1/1. Its activity is regulated as follows. Allosterically activated by GTP. Inhibited by UTP. Its function is as follows. Catalyzes the reversible phosphorylation of UMP to UDP. This Shewanella loihica (strain ATCC BAA-1088 / PV-4) protein is Uridylate kinase.